The following is a 391-amino-acid chain: Probable tRNA sulfurtransferase (391 aa).

The THUMP domain maps to 60-167; it reads DETVAALQRV…NKAYVYSNTL (108 aa). Residues 184–185, 209–210, R266, G288, and Q297 contribute to the ATP site; these read LL and YF.

This sequence belongs to the ThiI family.

It is found in the cytoplasm. The enzyme catalyses [ThiI sulfur-carrier protein]-S-sulfanyl-L-cysteine + a uridine in tRNA + 2 reduced [2Fe-2S]-[ferredoxin] + ATP + H(+) = [ThiI sulfur-carrier protein]-L-cysteine + a 4-thiouridine in tRNA + 2 oxidized [2Fe-2S]-[ferredoxin] + AMP + diphosphate. The catalysed reaction is [ThiS sulfur-carrier protein]-C-terminal Gly-Gly-AMP + S-sulfanyl-L-cysteinyl-[cysteine desulfurase] + AH2 = [ThiS sulfur-carrier protein]-C-terminal-Gly-aminoethanethioate + L-cysteinyl-[cysteine desulfurase] + A + AMP + 2 H(+). The protein operates within cofactor biosynthesis; thiamine diphosphate biosynthesis. Functionally, catalyzes the ATP-dependent transfer of a sulfur to tRNA to produce 4-thiouridine in position 8 of tRNAs, which functions as a near-UV photosensor. Also catalyzes the transfer of sulfur to the sulfur carrier protein ThiS, forming ThiS-thiocarboxylate. This is a step in the synthesis of thiazole, in the thiamine biosynthesis pathway. The sulfur is donated as persulfide by IscS. This Lachnoclostridium phytofermentans (strain ATCC 700394 / DSM 18823 / ISDg) (Clostridium phytofermentans) protein is Probable tRNA sulfurtransferase.